A 51-amino-acid chain; its full sequence is Putative ribosomal protein eL39-like 5 (51 aa).

The protein belongs to the eukaryotic ribosomal protein eL39 family.

The sequence is that of Putative ribosomal protein eL39-like 5 (RPL39P5) from Homo sapiens (Human).